The sequence spans 130 residues: Small ribosomal subunit protein uS11 (130 aa).

It belongs to the universal ribosomal protein uS11 family. In terms of assembly, part of the 30S ribosomal subunit. Interacts with proteins S7 and S18. Binds to IF-3.

Functionally, located on the platform of the 30S subunit, it bridges several disparate RNA helices of the 16S rRNA. Forms part of the Shine-Dalgarno cleft in the 70S ribosome. The protein is Small ribosomal subunit protein uS11 of Prochlorococcus marinus (strain MIT 9515).